Here is a 667-residue protein sequence, read N- to C-terminus: NADPH--cytochrome P450 reductase (667 aa).

The Lumenal segment spans residues 1–8 (MEILESID). Residues 9–29 (FIEVLILDNLGAIIIVAVIVG) form a helical membrane-spanning segment. Over 30–667 (TYLYMNKPPP…HGRYLQDVWF (638 aa)) the chain is Cytoplasmic. Residues 72-215 (MKIFFGTQTR…DFNRWKKDMW (144 aa)) enclose the Flavodoxin-like domain. FMN-binding positions include 164-173 (LGNKTYEHYN) and D199. The region spanning 277 to 511 (KNPYYAEVLE…FVRESHFKLP (235 aa)) is the FAD-binding FR-type domain. Residue R297 participates in NADP(+) binding. FAD is bound by residues 468 to 470 (TSV) and 484 to 487 (GVAS). Residues T527, 586–587 (SR), and 592–596 (KVYVQ) contribute to the NADP(+) site. W666 contributes to the FAD binding site.

The protein belongs to the NADPH--cytochrome P450 reductase family. This sequence in the N-terminal section; belongs to the flavodoxin family. In the C-terminal section; belongs to the flavoprotein pyridine nucleotide cytochrome reductase family. FAD is required as a cofactor. It depends on FMN as a cofactor.

The protein localises to the endoplasmic reticulum membrane. The enzyme catalyses 2 oxidized [cytochrome P450] + NADPH = 2 reduced [cytochrome P450] + NADP(+) + H(+). Functionally, this enzyme is required for electron transfer from NADP to cytochrome P450 in microsomes. It can also provide electron transfer to heme oxygenase and cytochrome B5. The protein is NADPH--cytochrome P450 reductase (redB) of Dictyostelium discoideum (Social amoeba).